Here is a 676-residue protein sequence, read N- to C-terminus: F420-dependent formate dehydrogenase 2 subunit alpha (676 aa).

The 4Fe-4S Mo/W bis-MGD-type domain occupies 4 to 60 (FKVVHTICPYCGTGCGIDLVVKDGKVVDSHPFKRHPVNEGKVCIKGNYCYEFVHSED). [4Fe-4S] cluster contacts are provided by cysteine 11, cysteine 14, cysteine 18, and cysteine 46. Residue selenocysteine 133 is a non-standard amino acid, selenocysteine.

The protein belongs to the prokaryotic molybdopterin-containing oxidoreductase family. As to quaternary structure, dimer of an alpha (FdhA2) and a beta (FdhB2) subunit. Requires [4Fe-4S] cluster as cofactor. It depends on Mo-bis(molybdopterin guanine dinucleotide) as a cofactor. Zn(2+) serves as cofactor.

The enzyme catalyses oxidized coenzyme F420-(gamma-L-Glu)(n) + formate + 2 H(+) = reduced coenzyme F420-(gamma-L-Glu)(n) + CO2. In terms of biological role, catalyzes the oxidation of formate to carbon dioxide, with coenzyme F420 as the electron acceptor. In vitro can also use methyl viologen as electron acceptor. This chain is F420-dependent formate dehydrogenase 2 subunit alpha, found in Methanococcus maripaludis (strain DSM 14266 / JCM 13030 / NBRC 101832 / S2 / LL).